The chain runs to 540 residues: Hydroxylamine reductase (540 aa).

Residues cysteine 3, cysteine 6, cysteine 15, and cysteine 21 each contribute to the [4Fe-4S] cluster site. Hybrid [4Fe-2O-2S] cluster contacts are provided by histidine 236, glutamate 260, cysteine 304, cysteine 395, cysteine 423, cysteine 448, glutamate 483, and lysine 485. The residue at position 395 (cysteine 395) is a Cysteine persulfide.

This sequence belongs to the HCP family. [4Fe-4S] cluster is required as a cofactor. Hybrid [4Fe-2O-2S] cluster serves as cofactor.

Its subcellular location is the cytoplasm. It carries out the reaction A + NH4(+) + H2O = hydroxylamine + AH2 + H(+). Catalyzes the reduction of hydroxylamine to form NH(3) and H(2)O. This chain is Hydroxylamine reductase, found in Methanosarcina mazei (strain ATCC BAA-159 / DSM 3647 / Goe1 / Go1 / JCM 11833 / OCM 88) (Methanosarcina frisia).